Here is a 1841-residue protein sequence, read N- to C-terminus: Sodium channel protein type 4 subunit alpha (1841 aa).

Residues 1–131 (MASSSLPTLV…RVAIKVLIHA (131 aa)) lie on the Cytoplasmic side of the membrane. Residues 32 to 60 (AMEEEARLQRNKQMEIEEPERKPRSDLEA) are compositionally biased toward basic and acidic residues. The interval 32-63 (AMEEEARLQRNKQMEIEEPERKPRSDLEAGKN) is disordered. An I repeat occupies 113–448 (MLSPFSIVRR…VVAMAYAEQN (336 aa)). Residues 132-150 (LFSMFIMITILTNCVFMTM) traverse the membrane as a helical segment. Topologically, residues 151 to 157 (SNPPSWS) are extracellular. A helical transmembrane segment spans residues 158 to 178 (KDVEYTFTGIYTFESLIKMLA). Over 179–192 (RGFCIDDFTFLRDP) the chain is Cytoplasmic. A helical transmembrane segment spans residues 193 to 210 (WNWLDFSVITMAYVTEFV). Residues 211-216 (DLGNIS) are Extracellular-facing. A glycan (N-linked (GlcNAc...) asparagine) is linked at N214. A helical membrane pass occupies residues 217–233 (ALRTFRVLRALKTITVI). Over 234 to 252 (PGLKTIVGALIQSVKKLSD) the chain is Cytoplasmic. The chain crosses the membrane as a helical span at residues 253-272 (VMILTVFCLSVFALVGLQLF). Over 273-385 (MGNLRQKCVR…PNYGYTSYDT (113 aa)) the chain is Extracellular. C280 and C354 form a disulfide bridge. Residues N288, N291, N297, N303, N315, N327, and N356 are each glycosylated (N-linked (GlcNAc...) asparagine). C363 and C369 are oxidised to a cystine. The pore-forming intramembrane region spans 386-410 (FSWAFLALFRLMTQDYWENLFQLTL). Residues 411-417 (RAAGKTY) are Extracellular-facing. A helical membrane pass occupies residues 418–438 (MIFFVVIIFLGSFYLINLILA). The Cytoplasmic segment spans residues 439-572 (VVAMAYAEQN…HIILLIVMDP (134 aa)). Residues 484–522 (ALEGGEEADGDPTHSKDCNGSLDTSGEKGPPRPSCSAES) are disordered. An II repeat occupies 554-826 (CCAPWVKFKH…QIAIGRIKWG (273 aa)). The helical transmembrane segment at 573 to 591 (FVDLGITICIVLNTLFMAM) threads the bilayer. Residues 592–602 (EHYPMTEHFDN) are Extracellular-facing. Residues 603–622 (VLSVGNLVFTGIFTAEMVLK) traverse the membrane as a helical segment. Topologically, residues 623-636 (LIAMDPYEYFQQGW) are cytoplasmic. The helical transmembrane segment at 637–656 (NIFDSFIVTLSLVELGLANV) threads the bilayer. The Extracellular portion of the chain corresponds to 657-658 (QG). A helical transmembrane segment spans residues 659–676 (LSVLRSFRLLRVFKLAKS). The Cytoplasmic segment spans residues 677 to 692 (WPTLNMLIKIIGNSVG). Residues 693–711 (ALGNLTLVLAIIVFIFAVV) form a helical membrane-spanning segment. The Extracellular portion of the chain corresponds to 712 to 740 (GMQLFGKSYKECVCKIASDCSLPRWHMHD). An intrachain disulfide couples C725 to C731. Positions 741–761 (FFHSFLIVFRILCGEWIETMW) form an intramembrane region, pore-forming. The Extracellular portion of the chain corresponds to 762–772 (DCMEVAGQAMC). C763 and C772 are oxidised to a cystine. The chain crosses the membrane as a helical span at residues 773 to 791 (LTVFLMVMVIGNLVVLNLF). Topologically, residues 792–1026 (LALLLSSFSA…ACFKIVEHNW (235 aa)) are cytoplasmic. 2 disordered regions span residues 854–896 (EPGG…LTDG) and 925–983 (SDLE…EGEL). Positions 867–887 (EDEKKEPPPEDGNKELKDNHI) are enriched in basic and acidic residues. 2 stretches are compositionally biased toward acidic residues: residues 925 to 941 (SDLE…FSEP) and 969 to 983 (EDPE…EGEL). Residues 1007–1320 (RGKMWWTLRR…KKYYNAMKKL (314 aa)) form an III repeat. A helical transmembrane segment spans residues 1027–1044 (FETFIVFMILLSSGALAF). Residues 1045–1057 (EDIYIEQRRVIRT) lie on the Extracellular side of the membrane. Residues 1058 to 1076 (ILEYADKVFTYIFILEMLL) traverse the membrane as a helical segment. The Cytoplasmic segment spans residues 1077–1090 (KWVAYGFKVYFTNA). The chain crosses the membrane as a helical span at residues 1091-1109 (WCWLDFLIVDVSIISLVAN). The Extracellular portion of the chain corresponds to 1110–1117 (WLGYSELG). The chain crosses the membrane as a helical span at residues 1118–1136 (PIKSLRTLRALRPLRALSR). Residues 1137 to 1153 (FEGMRVVVNALLGAIPS) lie on the Cytoplasmic side of the membrane. Residues 1154 to 1173 (IMNVLLVCLIFWLIFSIMGV) form a helical membrane-spanning segment. Over 1174 to 1224 (NLFAGKFYYCINTTTSERFDISVVNNKSECESLMYTGQVRWMNVKVNYDNV) the chain is Extracellular. The cysteines at positions 1183 and 1203 are disulfide-linked. N-linked (GlcNAc...) asparagine glycosylation is found at N1185 and N1199. The segment at residues 1225 to 1246 (GLGYLSLLQVATFKGWMDIMYA) is an intramembrane region (pore-forming). The Extracellular portion of the chain corresponds to 1247–1263 (AVDSREKEEQPDYEVNL). Residues 1264–1285 (YMYLYFVIFIIFGSFFTLNLFI) traverse the membrane as a helical segment. Residues 1286–1348 (GVIIDNFNQQ…MVYDFVTKQV (63 aa)) are Cytoplasmic-facing. Residues 1304 to 1306 (IFM) are important for rapid channel inactivation. The stretch at 1329–1627 (IPRPQNKIQG…WEKFDPDATQ (299 aa)) is one IV repeat. A helical transmembrane segment spans residues 1349 to 1366 (FDISIMILICLNMVTMMV). The Extracellular portion of the chain corresponds to 1367–1377 (ETDDQSQLKVD). Residues 1378–1396 (ILYNINMVFIIVFTGECVL) form a helical membrane-spanning segment. Residues 1397 to 1408 (KMFALRHYYFTI) are Cytoplasmic-facing. A helical membrane pass occupies residues 1409–1426 (GWNIFDFVVVILSIVGLA). At 1427 to 1439 (LSDLIQKYFVSPT) the chain is on the extracellular side. A helical transmembrane segment spans residues 1440 to 1456 (LFRVIRLARIGRVLRLI). Topologically, residues 1457 to 1475 (RGAKGIRTLLFALMMSLPA) are cytoplasmic. A helical membrane pass occupies residues 1476-1493 (LFNIGLLLFLVMFIYSIF). Residues 1494-1515 (GMSNFAYVKKESGIDDMFNFET) lie on the Extracellular side of the membrane. Positions 1516-1538 (FGNSIICLFEITTSAGWDGLLNP) form an intramembrane region, pore-forming. Residues 1539–1568 (ILNSGPPDCDPTLENPGTNIKGDCGNPSIG) lie on the Extracellular side of the membrane. C1547 and C1562 are joined by a disulfide. The helical transmembrane segment at 1569-1591 (ICFFCSYIIISFLIVVNMYIAII) threads the bilayer. Residues 1592 to 1841 (LENFNVATEE…VRPGVKESLV (250 aa)) lie on the Cytoplasmic side of the membrane. An IQ domain is found at 1721–1750 (EEVCAIKIQRAYRRHLLQRSVKQASYMYRH). The segment covering 1776–1794 (SEKEDNGVQSQGEKEKDST) has biased composition (basic and acidic residues). The tract at residues 1776–1841 (SEKEDNGVQS…VRPGVKESLV (66 aa)) is disordered. The segment covering 1801 to 1812 (TEVTAPSSSDTA) has biased composition (polar residues). Over residues 1814 to 1826 (TPPPPSPPPPSSP) the composition is skewed to pro residues.

Belongs to the sodium channel (TC 1.A.1.10) family. Nav1.4/SCN4A subfamily. In terms of assembly, the Nav1.4 voltage-gated sodium channel consists of an ion-conducting alpha subunit SCN4A which is functional on its own and a regulatory beta subunit SCN1B. SCN1B strongly enhances the presence of SCN4A at the cell surface. SCN1B is also required for rapid channel inactivation and recovery after inactivation. It prevents the decrease of channel activity in response to repetitive, high-frequency depolarizations. Interacts with the syntrophins SNTA1, SNTB1 and SNTB2 (via PDZ domain); probably links SCN4A to the actin cytoskeleton and the extracellular matrix via the dystrophin-associated protein complex and regulates its localization in muscle cells. Interacts with TMEM233; probable regulator of the channel. As to expression, detected in quadriceps muscle (at protein level). Detected in hind-limb skeletal muscles, but not in heart or brain. Detected at low levels in the myocardium. According to Pubme=26427606 detected also in brain.

The protein resides in the cell membrane. The enzyme catalyses Na(+)(in) = Na(+)(out). The channel is inhibited by tetrodotoxin. Its function is as follows. Pore-forming subunit of Nav1.4, a voltage-gated sodium (Nav) channel that directly mediates the depolarizing phase of action potentials in excitable membranes. Navs, also called VGSCs (voltage-gated sodium channels) or VDSCs (voltage-dependent sodium channels), operate by switching between closed and open conformations depending on the voltage difference across the membrane. In the open conformation they allow Na(+) ions to selectively pass through the pore, along their electrochemical gradient. The influx of Na+ ions provokes membrane depolarization, initiating the propagation of electrical signals throughout cells and tissues. Highly expressed in skeletal muscles, Nav1.4 generates the action potential crucial for muscle contraction. This Mus musculus (Mouse) protein is Sodium channel protein type 4 subunit alpha.